The sequence spans 337 residues: Ornithine carbamoyltransferase (337 aa).

Carbamoyl phosphate-binding positions include 56-59, Gln-83, Arg-107, and 134-137; these read STRT and HPTQ. Residues Asn-168, Asp-232, and 236–237 each bind L-ornithine; that span reads SM. Residues 274 to 275 and Arg-320 each bind carbamoyl phosphate; that span reads CL.

This sequence belongs to the aspartate/ornithine carbamoyltransferase superfamily. OTCase family.

Its subcellular location is the cytoplasm. The enzyme catalyses carbamoyl phosphate + L-ornithine = L-citrulline + phosphate + H(+). Its pathway is amino-acid biosynthesis; L-arginine biosynthesis; L-arginine from L-ornithine and carbamoyl phosphate: step 1/3. Functionally, reversibly catalyzes the transfer of the carbamoyl group from carbamoyl phosphate (CP) to the N(epsilon) atom of ornithine (ORN) to produce L-citrulline. This chain is Ornithine carbamoyltransferase, found in Shigella flexneri serotype 5b (strain 8401).